Reading from the N-terminus, the 117-residue chain is Circadian clock oscillator protein KaiB (117 aa).

This sequence belongs to the KaiB family. In terms of assembly, may undergo a major conformational rearrangment; in the free state forms homooligomers. When bound to KaiC switches to a monomeric thioredoxin-fold (KaiB(fs)). The active oscillator complex is probably KaiC(6):KaiB(6).

Its function is as follows. Component of the KaiBC clock protein complex, which constitutes the main circadian regulator in cyanobacteria; it may modify the ATPase activity of KaiC. In terms of biological role, may be a metamorphic protein which reversibly switches between an inactive tetrameric fold and a rare, thioredoxin-like monomeric fold (KaiB(fs)). KaiB(fs) binds phospho-KaiC, and perhaps clock output effectors. The chain is Circadian clock oscillator protein KaiB from Prochlorococcus marinus (strain SARG / CCMP1375 / SS120).